The chain runs to 101 residues: Chaperone modulatory protein CbpM (101 aa).

This sequence belongs to the CbpM family.

In terms of biological role, interacts with CbpA and inhibits both the DnaJ-like co-chaperone activity and the DNA binding activity of CbpA. Together with CbpA, modulates the activity of the DnaK chaperone system. Does not inhibit the co-chaperone activity of DnaJ. The protein is Chaperone modulatory protein CbpM of Salmonella paratyphi A (strain ATCC 9150 / SARB42).